Consider the following 71-residue polypeptide: Putative membrane protein insertion efficiency factor (71 aa).

The protein belongs to the UPF0161 family.

The protein resides in the cell membrane. Functionally, could be involved in insertion of integral membrane proteins into the membrane. This chain is Putative membrane protein insertion efficiency factor, found in Desulforudis audaxviator (strain MP104C).